The chain runs to 1227 residues: Tyrosine-protein kinase receptor ver-3 (1227 aa).

The N-terminal stretch at 1–17 (MKLKLTVLLILVHASAS) is a signal peptide. Over 18–764 (YKPPAIEVED…VQVNNAPKGS (747 aa)) the chain is Extracellular. Residues 20 to 110 (PPAIEVEDYQ…RESDTGTYSC (91 aa)) form the Ig-like C2-type 1 domain. A disulfide bridge links C52 with C110. N-linked (GlcNAc...) asparagine glycans are attached at residues N119, N211, N245, N255, N381, N425, and N528. The Ig-like C2-type 2 domain occupies 200–325 (VNFECRYKKE…EHENKETKYT (126 aa)). C204 and C313 are oxidised to a cystine. 2 consecutive Ig-like C2-type domains span residues 565–666 (PHHE…TSID) and 673–758 (PSIT…VQVN). Cystine bridges form between C592–C650 and C696–C740. N697 carries N-linked (GlcNAc...) asparagine glycosylation. The chain crosses the membrane as a helical span at residues 765-785 (LFFYWFLALLLLISIIAVFLL). Residues 786-1227 (TCKLRASNRL…ERYLIVESHA (442 aa)) are Cytoplasmic-facing. A Protein kinase domain is found at 847–1175 (LEILNPIGSG…HMRDSSSQFL (329 aa)). Residues 853–861 (IGSGHFGVV) and K886 contribute to the ATP site. The active-site Proton acceptor is the D1030. The segment at 1194 to 1227 (DWIQDSRPDVPNVSFQKSPKKQKEERYLIVESHA) is disordered. Positions 1214 to 1227 (KQKEERYLIVESHA) are enriched in basic and acidic residues.

This sequence belongs to the protein kinase superfamily. Tyr protein kinase family. As to expression, expressed in the ALA neuron.

It is found in the cell membrane. The enzyme catalyses L-tyrosyl-[protein] + ATP = O-phospho-L-tyrosyl-[protein] + ADP + H(+). Its function is as follows. Receptor tyrosine kinase which may be involved, downstream of pvf-1, in the positioning of ray 1, the most anterior ray sensillum in the male tail. This Caenorhabditis elegans protein is Tyrosine-protein kinase receptor ver-3.